We begin with the raw amino-acid sequence, 67 residues long: DNA-directed RNA polymerase subunit omega (67 aa).

Belongs to the RNA polymerase subunit omega family. As to quaternary structure, the RNAP catalytic core consists of 2 alpha, 1 beta, 1 beta' and 1 omega subunit. When a sigma factor is associated with the core the holoenzyme is formed, which can initiate transcription.

It carries out the reaction RNA(n) + a ribonucleoside 5'-triphosphate = RNA(n+1) + diphosphate. Functionally, promotes RNA polymerase assembly. Latches the N- and C-terminal regions of the beta' subunit thereby facilitating its interaction with the beta and alpha subunits. The chain is DNA-directed RNA polymerase subunit omega from Bacillus velezensis (strain DSM 23117 / BGSC 10A6 / LMG 26770 / FZB42) (Bacillus amyloliquefaciens subsp. plantarum).